We begin with the raw amino-acid sequence, 546 residues long: Germacrene-D synthase (546 aa).

Residues aspartate 303, aspartate 307, aspartate 448, and glutamate 456 each contribute to the Mg(2+) site. The short motif at 303-307 (DDIYD) is the DDXXD motif element.

It belongs to the terpene synthase family. The cofactor is Mg(2+). Mn(2+) serves as cofactor.

The catalysed reaction is (2E,6E)-farnesyl diphosphate = (-)-germacrene D + diphosphate. Its pathway is secondary metabolite biosynthesis; terpenoid biosynthesis. Sesquiterpene synthase that catalyzes the formation of germacrene D from trans,trans-farnesyl diphosphate (FPP). The polypeptide is Germacrene-D synthase (GDS) (Ocimum basilicum (Sweet basil)).